Consider the following 585-residue polypeptide: Arginine--tRNA ligase (585 aa).

A 'HIGH' region motif is present at residues 130-140 (ANPTGPMHVGH).

The protein belongs to the class-I aminoacyl-tRNA synthetase family. In terms of assembly, monomer.

It localises to the cytoplasm. The catalysed reaction is tRNA(Arg) + L-arginine + ATP = L-arginyl-tRNA(Arg) + AMP + diphosphate. This is Arginine--tRNA ligase from Methylorubrum extorquens (strain CM4 / NCIMB 13688) (Methylobacterium extorquens).